A 1860-amino-acid polypeptide reads, in one-letter code: Proprotein convertase subtilisin/kexin type 5 (1860 aa).

Residues 1-32 (MGWGSRCCCPGRLDLLCVLALLGGCLLPVCRT) form the signal peptide. Positions 33–114 (RVYTNHWAVK…QQVVKKRTKR (82 aa)) are excised as a propeptide. Residues 115 to 1743 (DYDFSRAQST…VRPATEHFKT (1629 aa)) lie on the Extracellular side of the membrane. Residues 134–453 (MWYMHCSDNT…FGLMDAEAMV (320 aa)) enclose the Peptidase S8 domain. Catalysis depends on charge relay system residues aspartate 171 and histidine 212. N-linked (GlcNAc...) asparagine glycans are attached at residues asparagine 225 and asparagine 381. Catalysis depends on serine 386, which acts as the Charge relay system. The P/Homo B domain maps to 461–601 (TVPRQHVCVE…SLVLYGTSVQ (141 aa)). A Cell attachment site motif is present at residues 519-521 (RGD). FU repeat units lie at residues 630–680 (EDYA…GHYH), 683–730 (KKRC…GSYQ), 734–777 (KNLC…GRYF), 779–824 (GQDC…SYYF), 832–879 (YKSC…GEYV), 882–927 (HGHC…WKFE), 929–979 (ENQC…GHYA), 982–1028 (GNTC…GEVQ), 1032–1077 (YEEC…KTYS), 1079–1121 (EVEC…GFYG), 1125–1168 (MGEC…KTQE), 1177–1221 (LRKL…GTWP), 1225–1272 (SGSC…GSYA), 1274–1318 (DGIC…RHVA), 1320–1363 (KGVC…GFYA), 1365–1411 (SRHC…GTYY), 1415–1461 (TKEC…SEYW), 1465–1510 (APGC…GYYA), 1514–1559 (SNRC…GYYA), 1563–1610 (TGRC…HYYV), 1614–1659 (TQTC…GEYR), and 1665–1712 (KFNC…SDPP). The interval 636-1727 (CDPECSEVGC…CDCQDTTDEC (1092 aa)) is CRM (Cys-rich motif). N-linked (GlcNAc...) asparagine glycosylation is present at asparagine 665. 3 N-linked (GlcNAc...) asparagine glycosylation sites follow: asparagine 752, asparagine 802, and asparagine 852. The PLAC domain occupies 869–913 (MGAICKDGEYVDEHGHCQTCEASCAKCQGPTQEDCTTCPMTRIFD). An N-linked (GlcNAc...) asparagine glycan is attached at asparagine 1014. The N-linked (GlcNAc...) asparagine glycan is linked to asparagine 1191. Residue asparagine 1290 is glycosylated (N-linked (GlcNAc...) asparagine). N-linked (GlcNAc...) asparagine glycosylation is present at asparagine 1497. 2 N-linked (GlcNAc...) asparagine glycosylation sites follow: asparagine 1685 and asparagine 1707. Residues 1744–1764 (ALFITSSMMLVLLLGAAVVVW) traverse the membrane as a helical segment. Residues 1765–1860 (KKSRGRVQPA…YDDESYSYYQ (96 aa)) are Cytoplasmic-facing. AC regions lie at residues 1807–1826 (VIEY…IVYM) and 1838–1860 (YGLL…SYYQ).

This sequence belongs to the peptidase S8 family. In terms of tissue distribution, expressed in T-lymphocytes.

Its subcellular location is the secreted. It is found in the endomembrane system. Its function is as follows. Serine endoprotease that processes various proproteins by cleavage at paired basic amino acids, recognizing the RXXX[KR]R consensus motif. Likely functions in the constitutive and regulated secretory pathways. Plays an essential role in pregnancy establishment by proteolytic activation of a number of important factors such as BMP2, CALD1 and alpha-integrins. In Homo sapiens (Human), this protein is Proprotein convertase subtilisin/kexin type 5 (PCSK5).